The chain runs to 470 residues: Cysteine--tRNA ligase (470 aa).

Cysteine 27 contacts Zn(2+). Residues 29–39 (PTVYNFFHIGN) carry the 'HIGH' region motif. Cysteine 211, histidine 236, and glutamate 240 together coordinate Zn(2+). A 'KMSKS' region motif is present at residues 268-272 (KMSKS). Residue lysine 271 participates in ATP binding.

Belongs to the class-I aminoacyl-tRNA synthetase family. Monomer. The cofactor is Zn(2+).

Its subcellular location is the cytoplasm. It carries out the reaction tRNA(Cys) + L-cysteine + ATP = L-cysteinyl-tRNA(Cys) + AMP + diphosphate. The sequence is that of Cysteine--tRNA ligase from Clostridium botulinum (strain Eklund 17B / Type B).